A 2076-amino-acid polypeptide reads, in one-letter code: Protein Ycf2 (2076 aa).

Residue 1458–1465 participates in ATP binding; that stretch reads GSIGTGRS.

The protein belongs to the Ycf2 family.

The protein resides in the plastid. Its subcellular location is the chloroplast stroma. Functionally, probable ATPase of unknown function. Its presence in a non-photosynthetic plant (Epifagus virginiana) and experiments in tobacco indicate that it has an essential function which is probably not related to photosynthesis. The sequence is that of Protein Ycf2 from Acorus calamus (Sweet flag).